The following is a 241-amino-acid chain: Small ribosomal subunit protein uS3c (241 aa).

The protein belongs to the universal ribosomal protein uS3 family. As to quaternary structure, part of the 30S ribosomal subunit.

Its subcellular location is the plastid. This Helicosporidium sp. subsp. Simulium jonesii (Green alga) protein is Small ribosomal subunit protein uS3c (rps3).